Consider the following 376-residue polypeptide: Glutamate 5-kinase (376 aa).

Residue Lys15 participates in ATP binding. The substrate site is built by Ser56, Asp143, and Asn155. 175–176 (SD) contributes to the ATP binding site. Positions 281–358 (KGTLTIDAGA…PDVMSILGIT (78 aa)) constitute a PUA domain.

It belongs to the glutamate 5-kinase family.

Its subcellular location is the cytoplasm. The enzyme catalyses L-glutamate + ATP = L-glutamyl 5-phosphate + ADP. Its pathway is amino-acid biosynthesis; L-proline biosynthesis; L-glutamate 5-semialdehyde from L-glutamate: step 1/2. Its function is as follows. Catalyzes the transfer of a phosphate group to glutamate to form L-glutamate 5-phosphate. This Rhodopseudomonas palustris (strain BisB18) protein is Glutamate 5-kinase.